Here is a 152-residue protein sequence, read N- to C-terminus: Leptin (152 aa).

An N-terminal signal peptide occupies residues 1–26 (MDHILALVLALLPLSLCVALPGALDA). The cysteines at positions 109 and 152 are disulfide-linked.

Belongs to the leptin family. As to expression, expressed mostly in the liver.

The protein localises to the secreted. Its function is as follows. May function as part of a signaling pathway that acts to regulate the size of the body fat depot. The sequence is that of Leptin (lep) from Takifugu rubripes (Japanese pufferfish).